Consider the following 499-residue polypeptide: Putative DUF21 domain-containing protein At1g03270 (499 aa).

Over 1 to 32 (MVVLSTLALVRAAYSLNSFVFEAEDIRFGSPW) the chain is Extracellular. Residues 29–211 (GSPWWFVVVG…GKGGELTHEE (183 aa)) form the CNNM transmembrane domain. Residues 33-53 (WFVVVGVACFLVLFAGIMSGL) traverse the membrane as a helical segment. Topologically, residues 54–91 (TLGLMSLGLVELEILQQSGSSAEKKQAAAILPVVKKQH) are cytoplasmic. The helical transmembrane segment at 92 to 112 (QLLVTLLLCNAAAMEALPICL) threads the bilayer. The Extracellular portion of the chain corresponds to 113–114 (DK). A helical membrane pass occupies residues 115–135 (IFHPFVAVLLSVTFVLAFGEI). The Cytoplasmic portion of the chain corresponds to 136–145 (IPQAICSRYG). The chain crosses the membrane as a helical span at residues 146–166 (LAVGANFLWLVRILMIICYPI). The Extracellular portion of the chain corresponds to 167–499 (AYPIGKVLDA…TEPLLAESDR (333 aa)). Asn181 is a glycosylation site (N-linked (GlcNAc...) asparagine). 3 consecutive CBS domains span residues 230 to 291 (MTPI…EAPV), 295 to 359 (SIRK…SNLT), and 365 to 431 (HESH…IVDE). Residues Asn357, Asn391, and Asn484 are each glycosylated (N-linked (GlcNAc...) asparagine).

It is found in the membrane. The polypeptide is Putative DUF21 domain-containing protein At1g03270 (CBSDUF4) (Arabidopsis thaliana (Mouse-ear cress)).